A 463-amino-acid polypeptide reads, in one-letter code: Siroheme synthase (463 aa).

Residues 1–203 are precorrin-2 dehydrogenase /sirohydrochlorin ferrochelatase; that stretch reads MDYLPLFHKL…GQGAEAERLL (203 aa). Residues 22–23 and 43–44 each bind NAD(+); these read EI and PE. Position 128 is a phosphoserine (S128). Positions 216 to 463 are uroporphyrinogen-III C-methyltransferase; that stretch reads GEVYLVGAGP…LAWFEGAQNS (248 aa). P225 is a binding site for S-adenosyl-L-methionine. The Proton acceptor role is filled by D248. Residue K270 is the Proton donor of the active site. S-adenosyl-L-methionine contacts are provided by residues 301–303, I306, 331–332, M383, and G412; these read GGD and TA.

The protein in the N-terminal section; belongs to the precorrin-2 dehydrogenase / sirohydrochlorin ferrochelatase family. In the C-terminal section; belongs to the precorrin methyltransferase family.

It carries out the reaction uroporphyrinogen III + 2 S-adenosyl-L-methionine = precorrin-2 + 2 S-adenosyl-L-homocysteine + H(+). The enzyme catalyses precorrin-2 + NAD(+) = sirohydrochlorin + NADH + 2 H(+). The catalysed reaction is siroheme + 2 H(+) = sirohydrochlorin + Fe(2+). It functions in the pathway cofactor biosynthesis; adenosylcobalamin biosynthesis; precorrin-2 from uroporphyrinogen III: step 1/1. The protein operates within cofactor biosynthesis; adenosylcobalamin biosynthesis; sirohydrochlorin from precorrin-2: step 1/1. It participates in porphyrin-containing compound metabolism; siroheme biosynthesis; precorrin-2 from uroporphyrinogen III: step 1/1. Its pathway is porphyrin-containing compound metabolism; siroheme biosynthesis; siroheme from sirohydrochlorin: step 1/1. It functions in the pathway porphyrin-containing compound metabolism; siroheme biosynthesis; sirohydrochlorin from precorrin-2: step 1/1. Functionally, multifunctional enzyme that catalyzes the SAM-dependent methylations of uroporphyrinogen III at position C-2 and C-7 to form precorrin-2 via precorrin-1. Then it catalyzes the NAD-dependent ring dehydrogenation of precorrin-2 to yield sirohydrochlorin. Finally, it catalyzes the ferrochelation of sirohydrochlorin to yield siroheme. This is Siroheme synthase from Pseudomonas entomophila (strain L48).